We begin with the raw amino-acid sequence, 330 residues long: Aspartate--ammonia ligase (330 aa).

It belongs to the class-II aminoacyl-tRNA synthetase family. AsnA subfamily.

The protein resides in the cytoplasm. It carries out the reaction L-aspartate + NH4(+) + ATP = L-asparagine + AMP + diphosphate + H(+). It functions in the pathway amino-acid biosynthesis; L-asparagine biosynthesis; L-asparagine from L-aspartate (ammonia route): step 1/1. This is Aspartate--ammonia ligase from Aeromonas salmonicida (strain A449).